Reading from the N-terminus, the 845-residue chain is Protein translocase subunit SecA (845 aa).

ATP-binding positions include Gln88, Gly106–Thr110, and Asp495. Residues Ser804–Lys838 are disordered. The segment covering Arg809–Pro818 has biased composition (basic residues). Zn(2+)-binding residues include Cys831, Cys833, Cys842, and Cys843.

It belongs to the SecA family. In terms of assembly, monomer and homodimer. Part of the essential Sec protein translocation apparatus which comprises SecA, SecYEG and auxiliary proteins SecDF. Other proteins may also be involved. Zn(2+) serves as cofactor.

It localises to the cell inner membrane. The protein resides in the cytoplasm. The enzyme catalyses ATP + H2O + cellular proteinSide 1 = ADP + phosphate + cellular proteinSide 2.. In terms of biological role, part of the Sec protein translocase complex. Interacts with the SecYEG preprotein conducting channel. Has a central role in coupling the hydrolysis of ATP to the transfer of proteins into and across the cell membrane, serving as an ATP-driven molecular motor driving the stepwise translocation of polypeptide chains across the membrane. This Halothermothrix orenii (strain H 168 / OCM 544 / DSM 9562) protein is Protein translocase subunit SecA.